The chain runs to 111 residues: Nucleoid-associated protein LBA0378 (111 aa).

It belongs to the YbaB/EbfC family. Homodimer.

Its subcellular location is the cytoplasm. It localises to the nucleoid. Its function is as follows. Binds to DNA and alters its conformation. May be involved in regulation of gene expression, nucleoid organization and DNA protection. The polypeptide is Nucleoid-associated protein LBA0378 (Lactobacillus acidophilus (strain ATCC 700396 / NCK56 / N2 / NCFM)).